We begin with the raw amino-acid sequence, 128 residues long: L-ectoine synthase (128 aa).

Belongs to the ectoine synthase family.

It carries out the reaction (2S)-4-acetamido-2-aminobutanoate = L-ectoine + H2O. Its pathway is amine and polyamine biosynthesis; ectoine biosynthesis; L-ectoine from L-aspartate 4-semialdehyde: step 3/3. Catalyzes the circularization of gamma-N-acetyl-alpha,gamma-diaminobutyric acid (ADABA) to ectoine (1,4,5,6-tetrahydro-2-methyl-4-pyrimidine carboxylic acid), which is an excellent osmoprotectant. The chain is L-ectoine synthase from Vibrio campbellii (strain ATCC BAA-1116).